A 481-amino-acid polypeptide reads, in one-letter code: Glycogen synthase (481 aa).

Residue lysine 15 participates in ADP-alpha-D-glucose binding.

This sequence belongs to the glycosyltransferase 1 family. Bacterial/plant glycogen synthase subfamily.

It catalyses the reaction [(1-&gt;4)-alpha-D-glucosyl](n) + ADP-alpha-D-glucose = [(1-&gt;4)-alpha-D-glucosyl](n+1) + ADP + H(+). The protein operates within glycan biosynthesis; glycogen biosynthesis. Functionally, synthesizes alpha-1,4-glucan chains using ADP-glucose. The chain is Glycogen synthase from Mesorhizobium japonicum (strain LMG 29417 / CECT 9101 / MAFF 303099) (Mesorhizobium loti (strain MAFF 303099)).